Consider the following 82-residue polypeptide: Toxin TdNa6 (82 aa).

The N-terminal stretch at Met-1 to Gly-20 is a signal peptide. Residues Lys-21–Cys-82 form the LCN-type CS-alpha/beta domain. 4 disulfides stabilise this stretch: Cys-32–Cys-82, Cys-36–Cys-58, Cys-44–Cys-63, and Cys-48–Cys-65.

The protein belongs to the long (4 C-C) scorpion toxin superfamily. Sodium channel inhibitor family. Beta subfamily. In terms of tissue distribution, expressed by the venom gland.

It localises to the secreted. Functionally, beta toxins bind voltage-independently at site-4 of sodium channels (Nav) and shift the voltage of activation toward more negative potentials thereby affecting sodium channel activation and promoting spontaneous and repetitive firing. Is toxic to arthropods. This chain is Toxin TdNa6, found in Tityus discrepans (Venezuelan scorpion).